Here is a 375-residue protein sequence, read N- to C-terminus: Cobalt-precorrin-5B C(1)-methyltransferase (375 aa).

It belongs to the CbiD family.

The enzyme catalyses Co-precorrin-5B + S-adenosyl-L-methionine = Co-precorrin-6A + S-adenosyl-L-homocysteine. Its pathway is cofactor biosynthesis; adenosylcobalamin biosynthesis; cob(II)yrinate a,c-diamide from sirohydrochlorin (anaerobic route): step 6/10. In terms of biological role, catalyzes the methylation of C-1 in cobalt-precorrin-5B to form cobalt-precorrin-6A. The polypeptide is Cobalt-precorrin-5B C(1)-methyltransferase (Paracidovorax citrulli (strain AAC00-1) (Acidovorax citrulli)).